The chain runs to 360 residues: DNA replication and repair protein RecF (360 aa).

ATP is bound at residue G30 to T37.

The protein belongs to the RecF family.

Its subcellular location is the cytoplasm. The RecF protein is involved in DNA metabolism; it is required for DNA replication and normal SOS inducibility. RecF binds preferentially to single-stranded, linear DNA. It also seems to bind ATP. This is DNA replication and repair protein RecF from Shewanella baltica (strain OS155 / ATCC BAA-1091).